We begin with the raw amino-acid sequence, 159 residues long: Ribosome maturation factor RimP (159 aa).

It belongs to the RimP family.

The protein localises to the cytoplasm. Required for maturation of 30S ribosomal subunits. The chain is Ribosome maturation factor RimP from Halothermothrix orenii (strain H 168 / OCM 544 / DSM 9562).